A 287-amino-acid chain; its full sequence is Pantothenate synthetase (287 aa).

Residue 30 to 37 (MGYLHEGH) participates in ATP binding. Residue H37 is the Proton donor of the active site. (R)-pantoate is bound at residue Q61. Q61 contributes to the beta-alanine binding site. 150–153 (GMKD) is a binding site for ATP. Q156 lines the (R)-pantoate pocket. ATP contacts are provided by residues V179 and 187 to 190 (LSSR).

The protein belongs to the pantothenate synthetase family. Homodimer.

The protein localises to the cytoplasm. The catalysed reaction is (R)-pantoate + beta-alanine + ATP = (R)-pantothenate + AMP + diphosphate + H(+). The protein operates within cofactor biosynthesis; (R)-pantothenate biosynthesis; (R)-pantothenate from (R)-pantoate and beta-alanine: step 1/1. Catalyzes the condensation of pantoate with beta-alanine in an ATP-dependent reaction via a pantoyl-adenylate intermediate. The chain is Pantothenate synthetase from Coprothermobacter proteolyticus (strain ATCC 35245 / DSM 5265 / OCM 4 / BT).